Reading from the N-terminus, the 382-residue chain is Succinate--CoA ligase [ADP-forming] subunit beta (382 aa).

One can recognise an ATP-grasp domain in the interval 9–237 (KQVFADAGIP…AAEGDELEQK (229 aa)). ATP-binding positions include lysine 45, 52-54 (GRG), glutamate 91, valine 94, and glutamate 99. Residues asparagine 191 and aspartate 205 each coordinate Mg(2+). Substrate-binding positions include asparagine 257 and 314–316 (GIT).

The protein belongs to the succinate/malate CoA ligase beta subunit family. In terms of assembly, heterotetramer of two alpha and two beta subunits. Mg(2+) serves as cofactor.

It carries out the reaction succinate + ATP + CoA = succinyl-CoA + ADP + phosphate. It catalyses the reaction GTP + succinate + CoA = succinyl-CoA + GDP + phosphate. It participates in carbohydrate metabolism; tricarboxylic acid cycle; succinate from succinyl-CoA (ligase route): step 1/1. Succinyl-CoA synthetase functions in the citric acid cycle (TCA), coupling the hydrolysis of succinyl-CoA to the synthesis of either ATP or GTP and thus represents the only step of substrate-level phosphorylation in the TCA. The beta subunit provides nucleotide specificity of the enzyme and binds the substrate succinate, while the binding sites for coenzyme A and phosphate are found in the alpha subunit. The sequence is that of Succinate--CoA ligase [ADP-forming] subunit beta from Haloarcula marismortui (strain ATCC 43049 / DSM 3752 / JCM 8966 / VKM B-1809) (Halobacterium marismortui).